The following is a 758-amino-acid chain: DNA ligase (758 aa).

A disordered region spans residues 1-28; sequence MPENFGAMRQDGLVSTSESDSPAPAATP. NAD(+) contacts are provided by residues 60-64, 109-110, and E148; these read DAEFD and SL. Residue K150 is the N6-AMP-lysine intermediate of the active site. NAD(+) is bound by residues R171, E208, K324, and K348. Zn(2+) is bound by residues C442, C445, C461, and C467. The BRCT domain occupies 660–749; it reads SVRRTLAGLT…PDHSAEAEEN (90 aa). Residues 735–758 form a disordered region; the sequence is LLAHGPDHSAEAEENESEGSTTND.

Belongs to the NAD-dependent DNA ligase family. LigA subfamily. The cofactor is Mg(2+). Mn(2+) is required as a cofactor.

The catalysed reaction is NAD(+) + (deoxyribonucleotide)n-3'-hydroxyl + 5'-phospho-(deoxyribonucleotide)m = (deoxyribonucleotide)n+m + AMP + beta-nicotinamide D-nucleotide.. Functionally, DNA ligase that catalyzes the formation of phosphodiester linkages between 5'-phosphoryl and 3'-hydroxyl groups in double-stranded DNA using NAD as a coenzyme and as the energy source for the reaction. It is essential for DNA replication and repair of damaged DNA. This chain is DNA ligase, found in Renibacterium salmoninarum (strain ATCC 33209 / DSM 20767 / JCM 11484 / NBRC 15589 / NCIMB 2235).